We begin with the raw amino-acid sequence, 931 residues long: Bifunctional glutamine synthetase adenylyltransferase/adenylyl-removing enzyme (931 aa).

The interval 1–434 is adenylyl removase; it reads MTLAPADLPV…STEFAALLAP (434 aa). The tract at residues 441 to 931 is adenylyl transferase; that stretch reads PDALANYWRS…ACRAAELPFA (491 aa).

It belongs to the GlnE family. The cofactor is Mg(2+).

It carries out the reaction [glutamine synthetase]-O(4)-(5'-adenylyl)-L-tyrosine + phosphate = [glutamine synthetase]-L-tyrosine + ADP. The catalysed reaction is [glutamine synthetase]-L-tyrosine + ATP = [glutamine synthetase]-O(4)-(5'-adenylyl)-L-tyrosine + diphosphate. Involved in the regulation of glutamine synthetase GlnA, a key enzyme in the process to assimilate ammonia. When cellular nitrogen levels are high, the C-terminal adenylyl transferase (AT) inactivates GlnA by covalent transfer of an adenylyl group from ATP to specific tyrosine residue of GlnA, thus reducing its activity. Conversely, when nitrogen levels are low, the N-terminal adenylyl removase (AR) activates GlnA by removing the adenylyl group by phosphorolysis, increasing its activity. The regulatory region of GlnE binds the signal transduction protein PII (GlnB) which indicates the nitrogen status of the cell. This chain is Bifunctional glutamine synthetase adenylyltransferase/adenylyl-removing enzyme, found in Stenotrophomonas maltophilia (strain K279a).